Consider the following 191-residue polypeptide: CASP-like protein 2U3 (191 aa).

The Cytoplasmic segment spans residues 1 to 25 (MGAYDGAEAPRAAPASTAANSRPSR). Residues 26–46 (LLLLHSLLLRLVAVVVSILVI) form a helical membrane-spanning segment. Residues 47-68 (AVMVHAKQRVMIFKAEWDNSKA) are Extracellular-facing. The chain crosses the membrane as a helical span at residues 69-89 (FVALVAISAICLGYSFLQFIL). At 90 to 114 (SAFHLCSKSWKSPTKCWAWMNFIAD) the chain is on the cytoplasmic side. Residues 115 to 135 (QILTYAMLGAAAAAAELAYIA) traverse the membrane as a helical segment. Over 136–157 (KNGSSRAQWQPICSTFNTFCTR) the chain is Extracellular. N-linked (GlcNAc...) asparagine glycosylation occurs at Asn-137. Residues 158–178 (AGASIILSFIAVLALANSSAI) traverse the membrane as a helical segment. The Cytoplasmic portion of the chain corresponds to 179–191 (SAYHLFRRPSSSV).

Belongs to the Casparian strip membrane proteins (CASP) family. Homodimer and heterodimers.

It is found in the cell membrane. This Selaginella moellendorffii (Spikemoss) protein is CASP-like protein 2U3.